Here is a 376-residue protein sequence, read N- to C-terminus: Serpin B6 (376 aa).

Residue Met1 is modified to N-acetylmethionine. Ser151 carries the post-translational modification Phosphoserine. The residue at position 195 (Lys195) is an N6-acetyllysine.

This sequence belongs to the serpin family. Ov-serpin subfamily. In terms of assembly, forms a complex with the monomeric form of beta-tryptase.

It is found in the cytoplasm. In terms of biological role, inhibitor of cathepsin G, kallikrein-8 and thrombin. May play an important role in the inner ear in the protection against leakage of lysosomal content during stress. May be involved in the regulation of serine proteinases present in the brain or extravasated from the blood. In Pongo abelii (Sumatran orangutan), this protein is Serpin B6 (SERPINB6).